The chain runs to 299 residues: Small ribosomal subunit biogenesis GTPase RsgA (299 aa).

The region spanning 64-225 (KNEMIRPPVA…VGDTPGFSSL (162 aa)) is the CP-type G domain. GTP is bound by residues 113-116 (TKTD) and 168-176 (GQTGAGKST). Zn(2+)-binding residues include Cys-249, Cys-254, His-256, and Cys-262.

It belongs to the TRAFAC class YlqF/YawG GTPase family. RsgA subfamily. As to quaternary structure, monomer. Associates with 30S ribosomal subunit, binds 16S rRNA. Zn(2+) is required as a cofactor.

The protein localises to the cytoplasm. In terms of biological role, one of several proteins that assist in the late maturation steps of the functional core of the 30S ribosomal subunit. Helps release RbfA from mature subunits. May play a role in the assembly of ribosomal proteins into the subunit. Circularly permuted GTPase that catalyzes slow GTP hydrolysis, GTPase activity is stimulated by the 30S ribosomal subunit. The sequence is that of Small ribosomal subunit biogenesis GTPase RsgA from Latilactobacillus sakei subsp. sakei (strain 23K) (Lactobacillus sakei subsp. sakei).